The primary structure comprises 146 residues: MVKKVLLINGPNLNLLGTREPEKYGTTSLKDIEQAAQNQATAKQDGSEVLVYQNNTEGFIIDRIHLAKQEGVGFIIINAGAYTHTSVGIRDALLGTAIPFIEVHITNVHQREPFRHQSYLSDKAVAVICGLGVYGYTASVEYALNY.

Y24 serves as the catalytic Proton acceptor. Residues N78, H84, and D91 each contribute to the substrate site. Catalysis depends on H104, which acts as the Proton donor. Substrate-binding positions include 105–106 (IT) and R115.

The protein belongs to the type-II 3-dehydroquinase family. In terms of assembly, homododecamer. Adopts a ring-like structure, composed of an arrangement of two hexameric rings stacked on top of one another.

It catalyses the reaction 3-dehydroquinate = 3-dehydroshikimate + H2O. It functions in the pathway aromatic compound metabolism; 3,4-dihydroxybenzoate biosynthesis; 3,4-dihydroxybenzoate from 3-dehydroquinate: step 1/2. Is involved in the catabolism of quinate. Allows the utilization of quinate as carbon source via the beta-ketoadipate pathway. This is Catabolic 3-dehydroquinase from Scheffersomyces stipitis (strain ATCC 58785 / CBS 6054 / NBRC 10063 / NRRL Y-11545) (Yeast).